A 429-amino-acid polypeptide reads, in one-letter code: MKTSILILAAGLGTRIKSQKPKVLQELCQKSMILHILKKAFALSDDVSVVLSHQKERVEKEILEYFPKTQILEQDLQNYPGTAGALSGFEPKNERVLILCGDMPLVEQTSLEALLSNNAKLNLAVFKARDPKSYGRVVIKNDSVEKIVEFKDANTQEKEINTCNAGVYVIDSRLLKELLPLIDNNNAAKEYYLTDIVKLAKEKDVMIKAVFVDEDEFMGINDKFELSIAENFMQEKIKKYWMQQGVIFHLPQSTFIGADVEFVGECEVYENVRIEGKSKIINSIIKSSSVIENSIVENSDVGPLAHLRPNCELKNTHIGNFVECKNAKLNTVKAGHLSYLGDCEIDSGTNIGCGTITCNYDGVKKHKTIIGKNVFVGSDTQFIAPVKIEDEVIIAAGSTVSVNVEKGALFINRAEHKMIKDYYYKKFQK.

Residues 1 to 223 (MKTSILILAA…EDEFMGINDK (223 aa)) are pyrophosphorylase. UDP-N-acetyl-alpha-D-glucosamine-binding positions include 8–11 (LAAG), K22, and 81–82 (GT). D102 contacts Mg(2+). Residues G135, E149, N164, and N221 each contribute to the UDP-N-acetyl-alpha-D-glucosamine site. Position 221 (N221) interacts with Mg(2+). The segment at 224–244 (FELSIAENFMQEKIKKYWMQQ) is linker. Residues 245–429 (GVIFHLPQST…KDYYYKKFQK (185 aa)) form an N-acetyltransferase region. UDP-N-acetyl-alpha-D-glucosamine-binding residues include R308 and K325. H336 (proton acceptor) is an active-site residue. Y339 and N350 together coordinate UDP-N-acetyl-alpha-D-glucosamine. Residues 359 to 360 (NY), S378, A396, and R413 each bind acetyl-CoA.

In the N-terminal section; belongs to the N-acetylglucosamine-1-phosphate uridyltransferase family. This sequence in the C-terminal section; belongs to the transferase hexapeptide repeat family. Homotrimer. It depends on Mg(2+) as a cofactor.

The protein localises to the cytoplasm. The enzyme catalyses alpha-D-glucosamine 1-phosphate + acetyl-CoA = N-acetyl-alpha-D-glucosamine 1-phosphate + CoA + H(+). It carries out the reaction N-acetyl-alpha-D-glucosamine 1-phosphate + UTP + H(+) = UDP-N-acetyl-alpha-D-glucosamine + diphosphate. Its pathway is nucleotide-sugar biosynthesis; UDP-N-acetyl-alpha-D-glucosamine biosynthesis; N-acetyl-alpha-D-glucosamine 1-phosphate from alpha-D-glucosamine 6-phosphate (route II): step 2/2. It participates in nucleotide-sugar biosynthesis; UDP-N-acetyl-alpha-D-glucosamine biosynthesis; UDP-N-acetyl-alpha-D-glucosamine from N-acetyl-alpha-D-glucosamine 1-phosphate: step 1/1. The protein operates within bacterial outer membrane biogenesis; LPS lipid A biosynthesis. Catalyzes the last two sequential reactions in the de novo biosynthetic pathway for UDP-N-acetylglucosamine (UDP-GlcNAc). The C-terminal domain catalyzes the transfer of acetyl group from acetyl coenzyme A to glucosamine-1-phosphate (GlcN-1-P) to produce N-acetylglucosamine-1-phosphate (GlcNAc-1-P), which is converted into UDP-GlcNAc by the transfer of uridine 5-monophosphate (from uridine 5-triphosphate), a reaction catalyzed by the N-terminal domain. The sequence is that of Bifunctional protein GlmU from Campylobacter jejuni subsp. jejuni serotype O:23/36 (strain 81-176).